The chain runs to 190 residues: Probable nicotinate-nucleotide adenylyltransferase (190 aa).

It belongs to the NadD family.

The catalysed reaction is nicotinate beta-D-ribonucleotide + ATP + H(+) = deamido-NAD(+) + diphosphate. The protein operates within cofactor biosynthesis; NAD(+) biosynthesis; deamido-NAD(+) from nicotinate D-ribonucleotide: step 1/1. Catalyzes the reversible adenylation of nicotinate mononucleotide (NaMN) to nicotinic acid adenine dinucleotide (NaAD). The sequence is that of Probable nicotinate-nucleotide adenylyltransferase from Azobacteroides pseudotrichonymphae genomovar. CFP2.